A 48-amino-acid chain; its full sequence is Sperm protamine R3 isoform 1 (48 aa).

Over residues 1–29 (ARRRHSMKKKRKSVRRRKTRKNQRKRKNS) the composition is skewed to basic residues. Residues 1–48 (ARRRHSMKKKRKSVRRRKTRKNQRKRKNSLGRSFKQHGFLKQPPRFRP) form a disordered region.

Testis.

The protein resides in the nucleus. The protein localises to the chromosome. In terms of biological role, protamines substitute for histones in the chromatin of sperm during the haploid phase of spermatogenesis. They compact sperm DNA into a highly condensed, stable and inactive complex. In Hydrolagus colliei (Spotted ratfish), this protein is Sperm protamine R3 isoform 1.